A 91-amino-acid polypeptide reads, in one-letter code: Teretoxin Tan6.2 (91 aa).

The first 21 residues, 1–21 (MATSGRLLCVCLVLGLVFGSL), serve as a signal peptide directing secretion. A propeptide spanning residues 22–50 (GYPVMEKKRAGKNFDLGTIANWAWQIGEK) is cleaved from the precursor.

The protein belongs to the teretoxin M (TM) superfamily. Post-translationally, contains 3 disulfide bonds. Expressed by the venom duct.

It localises to the secreted. This chain is Teretoxin Tan6.2, found in Terebra anilis (Auger snail).